Reading from the N-terminus, the 82-residue chain is RNA-binding protein Hfq (82 aa).

The 61-residue stretch at 11–71 (DTFLNHVRKT…ISTIMPGAPI (61 aa)) folds into the Sm domain.

This sequence belongs to the Hfq family. Homohexamer.

In terms of biological role, RNA chaperone that binds small regulatory RNA (sRNAs) and mRNAs to facilitate mRNA translational regulation in response to envelope stress, environmental stress and changes in metabolite concentrations. Also binds with high specificity to tRNAs. This is RNA-binding protein Hfq from Rhodopseudomonas palustris (strain HaA2).